The primary structure comprises 232 residues: Large ribosomal subunit protein uL1 (232 aa).

This sequence belongs to the universal ribosomal protein uL1 family. As to quaternary structure, part of the 50S ribosomal subunit.

Its function is as follows. Binds directly to 23S rRNA. The L1 stalk is quite mobile in the ribosome, and is involved in E site tRNA release. In terms of biological role, protein L1 is also a translational repressor protein, it controls the translation of the L11 operon by binding to its mRNA. The sequence is that of Large ribosomal subunit protein uL1 from Variovorax paradoxus (strain S110).